A 512-amino-acid polypeptide reads, in one-letter code: Maturase K (512 aa).

The protein belongs to the intron maturase 2 family. MatK subfamily.

It is found in the plastid. The protein localises to the chloroplast. Functionally, usually encoded in the trnK tRNA gene intron. Probably assists in splicing its own and other chloroplast group II introns. The polypeptide is Maturase K (Acer platanoides (Norway maple)).